The primary structure comprises 153 residues: UPF0743 protein YCR087C-A (153 aa).

2 consecutive C2HC LYAR-type zinc fingers follow at residues 1–26 and 27–52; these read MVTF…YRCP and NAYY…TSCI. Zn(2+)-binding residues include cysteine 6, cysteine 9, histidine 21, cysteine 25, cysteine 32, cysteine 35, histidine 48, and cysteine 51. Residues 63-96 are disordered; sequence YKGNKKQKQKQQQKQQQKQHQHQPVATPAKKVEK. The span at 65 to 83 shows a compositional bias: basic residues; it reads GNKKQKQKQQQKQQQKQHQ.

The protein belongs to the UPF0743 family.

It is found in the nucleus. The protein localises to the nucleolus. The polypeptide is UPF0743 protein YCR087C-A (Saccharomyces cerevisiae (strain ATCC 204508 / S288c) (Baker's yeast)).